Here is a 421-residue protein sequence, read N- to C-terminus: Gamma-glutamyl phosphate reductase (421 aa).

Belongs to the gamma-glutamyl phosphate reductase family.

Its subcellular location is the cytoplasm. The enzyme catalyses L-glutamate 5-semialdehyde + phosphate + NADP(+) = L-glutamyl 5-phosphate + NADPH + H(+). Its pathway is amino-acid biosynthesis; L-proline biosynthesis; L-glutamate 5-semialdehyde from L-glutamate: step 2/2. Catalyzes the NADPH-dependent reduction of L-glutamate 5-phosphate into L-glutamate 5-semialdehyde and phosphate. The product spontaneously undergoes cyclization to form 1-pyrroline-5-carboxylate. In Acinetobacter baylyi (strain ATCC 33305 / BD413 / ADP1), this protein is Gamma-glutamyl phosphate reductase.